A 60-amino-acid polypeptide reads, in one-letter code: UPF0291 protein Nther_1806 (60 aa).

The protein belongs to the UPF0291 family.

Its subcellular location is the cytoplasm. This Natranaerobius thermophilus (strain ATCC BAA-1301 / DSM 18059 / JW/NM-WN-LF) protein is UPF0291 protein Nther_1806.